Consider the following 534-residue polypeptide: EH domain-containing protein 1 (534 aa).

Position 1 is an N-acetylmethionine (Met-1). One can recognise a Dynamin-type G domain in the interval 55-286 (FDNKPMVLLV…DLFKDIQSLP (232 aa)). Residues 65-72 (GQYSTGKT) form a G1 motif region. 65 to 72 (GQYSTGKT) provides a ligand contact to ATP. The segment at 91–92 (EP) is G2 motif. A G3 motif region spans residues 153–156 (DTPG). Positions 198–227 (DEFSEVIKALKNHEDKIRVVLNKADQIETQ) form a coiled coil. The G4 motif stretch occupies residues 219–222 (NKAD). ATP is bound at residue Lys-220. Ile-243 is a region of interest (G5 motif). Trp-258 serves as a coordination point for ATP. A phosphoserine mark is found at Ser-355 and Ser-456. Positions 444 to 532 (DKPTYDEIFY…PHLVPPSKRR (89 aa)) constitute an EH domain. Residues 476–511 (LPNTVLGKIWKLADVDKDGLLDDEEFALANHLIKVK) enclose the EF-hand domain. Asp-489, Asp-491, Asp-493, and Glu-500 together coordinate Ca(2+).

This sequence belongs to the TRAFAC class dynamin-like GTPase superfamily. Dynamin/Fzo/YdjA family. EHD subfamily. Homooligomer, and heterooligomer with EHD2, EHD3 and EHD4, ATP-binding is required for heterooligomerization. Interacts (via EH domain) with MICALL1 (via NPF1 motif); the interaction is direct and recruits EHD1 to membranes. Interacts with RAB35; the interaction is indirect through MICALL1 and recruits EHD1 to membranes. Interacts (via EH domain) with PACSIN2 (via NPF motifs); regulates localization to tubular recycling endosome membranes. Interacts with PACSIN1. Interacts with RAB8A. Interacts with FER1L5 (via second C2 domain). Interacts with MYOF. Interacts with ZFYVE20. Interacts (via EH domain) with RAB11FIP2.

The protein localises to the recycling endosome membrane. Its subcellular location is the early endosome membrane. It is found in the cell membrane. It localises to the cell projection. The protein resides in the cilium membrane. Functionally, ATP- and membrane-binding protein that controls membrane reorganization/tubulation upon ATP hydrolysis. Acts in early endocytic membrane fusion and membrane trafficking of recycling endosomes. Recruited to endosomal membranes upon nerve growth factor stimulation, indirectly regulates neurite outgrowth. Plays a role in myoblast fusion. Involved in the unidirectional retrograde dendritic transport of endocytosed BACE1 and in efficient sorting of BACE1 to axons implicating a function in neuronal APP processing. Plays a role in the formation of the ciliary vesicle (CV), an early step in cilium biogenesis. Proposed to be required for the fusion of distal appendage vesicles (DAVs) to form the CV by recruiting SNARE complex component SNAP29. Is required for recruitment of transition zone proteins CEP290, RPGRIP1L, TMEM67 and B9D2, and of IFT20 following DAV reorganization before Rab8-dependent ciliary membrane extension. Required for the loss of CCP110 form the mother centriole essential for the maturation of the basal body during ciliogenesis. In Pongo abelii (Sumatran orangutan), this protein is EH domain-containing protein 1.